The sequence spans 670 residues: Zinc finger and BTB domain-containing protein 5 (670 aa).

Residues 24-93 (CDCVIVVGNR…MYTSTLMLGE (70 aa)) form the BTB domain. 2 disordered regions span residues 158–256 (LSSS…QEDG) and 268–382 (EDAQ…SSTD). Positions 170-181 (PMSSSMRSSLDQ) are enriched in polar residues. The residue at position 234 (serine 234) is a Phosphoserine. Lysine 239 is covalently cross-linked (Glycyl lysine isopeptide (Lys-Gly) (interchain with G-Cter in SUMO2)). A compositionally biased stretch (polar residues) spans 285 to 295 (SRATQVETSFE). Residues lysine 317 and lysine 325 each participate in a glycyl lysine isopeptide (Lys-Gly) (interchain with G-Cter in SUMO2) cross-link. Residues 345–360 (AEGSESVEVEGVVVSA) are compositionally biased toward low complexity. Positions 361–374 (EKIDLSPESSDRSF) are enriched in basic and acidic residues. Serine 366 carries the phosphoserine modification. Residues lysine 399 and lysine 410 each participate in a glycyl lysine isopeptide (Lys-Gly) (interchain with G-Cter in SUMO2) cross-link. Residues 414-432 (SNFSASQSTDDNLPNTTSD) are compositionally biased toward polar residues. Disordered regions lie at residues 414–433 (SNFS…TSDC) and 442–470 (LLSP…EPAD). Over residues 444–459 (SPEAGPAGGPSSAPGS) the composition is skewed to low complexity. Glycyl lysine isopeptide (Lys-Gly) (interchain with G-Cter in SUMO2) cross-links involve residues lysine 535, lysine 587, and lysine 590. The segment at 606-628 (YACKICCKTFLTLTDCKKHIRVH) adopts a C2H2-type 1 zinc-finger fold. Residues 634–657 (YACLKCGKRFSQSSHLYKHSKTTC) form a C2H2-type 2; atypical zinc finger. Residues lysine 638 and lysine 651 each participate in a glycyl lysine isopeptide (Lys-Gly) (interchain with G-Cter in SUMO2) cross-link.

It localises to the nucleus. In terms of biological role, may be involved in transcriptional regulation. This chain is Zinc finger and BTB domain-containing protein 5 (Zbtb5), found in Mus musculus (Mouse).